The sequence spans 40 residues: U1-ectatotoxin-Eb1a subunit A (40 aa).

It belongs to the ectatomin family. Ectatomin-Eq subfamily. In terms of assembly, heterodimer of subunits A and B; disulfide-linked. Expressed by the venom gland.

The protein resides in the secreted. It localises to the target cell membrane. The polypeptide is U1-ectatotoxin-Eb1a subunit A (Ectatomma brunneum (Ant)).